A 79-amino-acid polypeptide reads, in one-letter code: Raniseptin-3 (79 aa).

The signal sequence occupies residues 1–22; it reads MAFLKKSLFLVLFLGIVSLSIC. Residues 23–49 constitute a propeptide that is removed on maturation; the sequence is EEEKREGEEEEKQEEENEELSEEELRE.

The protein belongs to the frog skin active peptide (FSAP) family. Dermaseptin subfamily. In terms of tissue distribution, expressed by the skin glands.

It is found in the secreted. Functionally, has antibacterial activity. The polypeptide is Raniseptin-3 (Boana raniceps (Chaco tree frog)).